Reading from the N-terminus, the 340-residue chain is Putative methionyl-tRNA formyltransferase (340 aa).

It belongs to the Fmt family.

The protein localises to the mitochondrion. It localises to the mitochondrion matrix. Its subcellular location is the cytoplasm. It catalyses the reaction L-methionyl-tRNA(fMet) + (6R)-10-formyltetrahydrofolate = N-formyl-L-methionyl-tRNA(fMet) + (6S)-5,6,7,8-tetrahydrofolate + H(+). Formylates methionyl-tRNA in mitochondria and the cytoplasm. Responsible for the formylation of the N-terminally formylated (Nt-formylated) mitochondrial matrix proteins that are encoded by mitochondrial DNA. Nt-formylated proteins in the cytoplasm are strongly up-regulated in stationary phase or upon starvation for specific amino acids and are targeted for degradation by an E3 ubiquitin ligase-mediated fMet/N-end rule pathway. Increased Nt-formylation of cytosolic proteins appears to be important for adaptation to these stresses. This chain is Putative methionyl-tRNA formyltransferase (fmt1), found in Schizosaccharomyces pombe (strain 972 / ATCC 24843) (Fission yeast).